The chain runs to 951 residues: Protein translocase subunit SecA 1 (951 aa).

ATP-binding positions include Gln-87, Gly-105 to Thr-109, and Asp-525. The interval Pro-911–Gly-942 is disordered. Zn(2+) is bound by residues Cys-937, Cys-939, Cys-948, and His-949.

The protein belongs to the SecA family. As to quaternary structure, monomer and homodimer. Part of the essential Sec protein translocation apparatus which comprises SecA, SecYEG and auxiliary proteins SecDF-YajC and YidC. It depends on Zn(2+) as a cofactor.

The protein localises to the cell inner membrane. It is found in the cytoplasm. It catalyses the reaction ATP + H2O + cellular proteinSide 1 = ADP + phosphate + cellular proteinSide 2.. In terms of biological role, part of the Sec protein translocase complex. Interacts with the SecYEG preprotein conducting channel. Has a central role in coupling the hydrolysis of ATP to the transfer of proteins into and across the cell membrane, serving both as a receptor for the preprotein-SecB complex and as an ATP-driven molecular motor driving the stepwise translocation of polypeptide chains across the membrane. The polypeptide is Protein translocase subunit SecA 1 (Nitrobacter hamburgensis (strain DSM 10229 / NCIMB 13809 / X14)).